A 640-amino-acid chain; its full sequence is Threonine--tRNA ligase (640 aa).

The TGS domain maps to 1-61; sequence MPTITLPDGS…ACDADVTIIT (61 aa). A catalytic region spans residues 243 to 534; that stretch reads DHRKIGKALD…LIEQYAGNMP (292 aa). Positions 334, 385, and 511 each coordinate Zn(2+).

This sequence belongs to the class-II aminoacyl-tRNA synthetase family. As to quaternary structure, homodimer. Zn(2+) serves as cofactor.

It localises to the cytoplasm. It carries out the reaction tRNA(Thr) + L-threonine + ATP = L-threonyl-tRNA(Thr) + AMP + diphosphate + H(+). In terms of biological role, catalyzes the attachment of threonine to tRNA(Thr) in a two-step reaction: L-threonine is first activated by ATP to form Thr-AMP and then transferred to the acceptor end of tRNA(Thr). Also edits incorrectly charged L-seryl-tRNA(Thr). This is Threonine--tRNA ligase from Dichelobacter nodosus (strain VCS1703A).